A 198-amino-acid polypeptide reads, in one-letter code: Putative 3-methyladenine DNA glycosylase (198 aa).

Belongs to the DNA glycosylase MPG family.

This Rhizobium johnstonii (strain DSM 114642 / LMG 32736 / 3841) (Rhizobium leguminosarum bv. viciae) protein is Putative 3-methyladenine DNA glycosylase.